Here is an 810-residue protein sequence, read N- to C-terminus: MPEKPYDHIAIELKWHERWQDAQFYKAEENSAKPKFYVLEMLPYPSGTLHIGHIRNYSIGDALARYKWMRGFNVLHPMGWDAFGLPAENAAIANKVPPRQWTLQNIAAMKKTHRRFAFSYDWDREVSTCEPEYYRWNQWFFLRMLERGLAYRKRALVNWCPKCATVLANEQVVDGCCWRHEGTPVEQRALDQWFLKITDYADQLLDEMARLEGGWPERVLTMQRNWIGRSEGAEIDFTLAGAGTPIRVFTTRVDTIYGATSVILAPEHPLNETLLDSEKKAKAKAMVDSRAGRDPGDIDKEGFFTGHYAVNPYNGEQVPIWIANFVLMGYGTGAIMAVPAHDERDFEFCTKYGIPITPVIRPVDQPAGEPVALPYGEYGILENSGEWSGLASAEARRQMSAYAEQHGFGKSAITFRIKDWGISRQRYWGTPIPVIHCPSCGVVPVPDDQLPVVLPDRIEITGAGRSPLENVPEFVNVACPKCGEPARRETDTMDTFVDSSWYFYRYCDPHNSERPFDPAKIAYWFEIDQYIGGIEHAILHLIYSRFFTKVMRDIGLISNNEPARRLFTQGMVIAEGAKMSKSKGNVVGADLLADKFGADTARMFVLSNVPPEKEVDWREEGAEGTYRFLGRVYRFTTRNVPAQQRSGDADRKVVRKLHQTLKKITEDFETRWHFNTCIASIMELVNLLYAEEQNISAAVMPQILESLALMLAPFAPYLSQEMWEEIGKEGPVFRQAWPAFDPELAKEEGAEIVVQVNGKVRTRITAPFGTAKEELESRSLAHEKVKPFIDGKQVMKIITVPDKLVNIVVK.

The short motif at 43 to 53 (PYPSGTLHIGH) is the 'HIGH' region element. Positions 578-582 (KMSKS) match the 'KMSKS' region motif. Residue Lys-581 coordinates ATP.

It belongs to the class-I aminoacyl-tRNA synthetase family.

The protein localises to the cytoplasm. It carries out the reaction tRNA(Leu) + L-leucine + ATP = L-leucyl-tRNA(Leu) + AMP + diphosphate. This chain is Leucine--tRNA ligase, found in Solibacter usitatus (strain Ellin6076).